We begin with the raw amino-acid sequence, 209 residues long: Kynurenine formamidase (209 aa).

Phe-18 lines the substrate pocket. Zn(2+) contacts are provided by His-48, His-52, and Asp-54. Catalysis depends on His-58, which acts as the Proton donor/acceptor. Zn(2+) contacts are provided by His-160 and Glu-172.

It belongs to the Cyclase 1 superfamily. KynB family. In terms of assembly, homodimer. Zn(2+) is required as a cofactor.

The enzyme catalyses N-formyl-L-kynurenine + H2O = L-kynurenine + formate + H(+). It functions in the pathway amino-acid degradation; L-tryptophan degradation via kynurenine pathway; L-kynurenine from L-tryptophan: step 2/2. In terms of biological role, catalyzes the hydrolysis of N-formyl-L-kynurenine to L-kynurenine, the second step in the kynurenine pathway of tryptophan degradation. The chain is Kynurenine formamidase from Bordetella avium (strain 197N).